We begin with the raw amino-acid sequence, 360 residues long: Peptide chain release factor 1 (360 aa).

Q235 is modified (N5-methylglutamine).

It belongs to the prokaryotic/mitochondrial release factor family. Methylated by PrmC. Methylation increases the termination efficiency of RF1.

It localises to the cytoplasm. Peptide chain release factor 1 directs the termination of translation in response to the peptide chain termination codons UAG and UAA. The chain is Peptide chain release factor 1 from Burkholderia cenocepacia (strain HI2424).